The chain runs to 329 residues: Protein-arginine N-acetylglucosaminyltransferase NleB1 (329 aa).

The N-beta-linked (GlcNAc) arginine; by autocatalysis glycan is linked to arginine 13. 48–50 (QWF) lines the UDP-N-acetyl-alpha-D-glucosamine pocket. Arginine 53 carries N-beta-linked (GlcNAc) arginine; by autocatalysis glycosylation. Tyrosine 72 is a UDP-N-acetyl-alpha-D-glucosamine binding site. N-beta-linked (GlcNAc) arginine; by autocatalysis glycosylation is present at arginine 159. 219–222 (YLDA) is a UDP-N-acetyl-alpha-D-glucosamine binding site. The DXD motif motif lies at 221–223 (DAD). Aspartate 223 is a Mn(2+) binding site. Catalysis depends on glutamate 253, which acts as the Proton acceptor. A glycan (N-beta-linked (GlcNAc) arginine; by autocatalysis) is linked at arginine 293. Mn(2+) contacts are provided by asparagine 320 and serine 322. UDP-N-acetyl-alpha-D-glucosamine-binding positions include serine 322 and 327 to 329 (SSW).

The protein belongs to the glycosyltransferase NleB family. The cofactor is Mn(2+). Post-translationally, auto-glycosylated: arginine GlcNAcylation is required for activity toward death domain-containing host target proteins.

Its subcellular location is the secreted. The protein localises to the host cytoplasm. It carries out the reaction L-arginyl-[protein] + UDP-N-acetyl-alpha-D-glucosamine = N(omega)-(N-acetyl-beta-D-glucosaminyl)-L-arginyl-[protein] + UDP + H(+). Protein-arginine N-acetylglucosaminyltransferase activity is inhibited by 100066N compound (flavone analog) and 102644N compound (a substituted isoxazole). Its function is as follows. Protein-arginine N-acetylglucosaminyltransferase effector that disrupts TNF signaling in infected cells, including NF-kappa-B signaling, apoptosis and necroptosis. Acts by catalyzing the transfer of a single N-acetylglucosamine (GlcNAc) to a conserved arginine residue in the death domain of host proteins such as FADD: arginine GlcNAcylation prevents homotypic/heterotypic death domain interactions and assembly of the oligomeric TNF-alpha receptor complex, thereby disrupting TNF signaling. Also acts on host proteins without a death domain: catalyzes arginine GlcNAcylation of host GAPDH protein, thereby preventing GAPDH interaction with TRAF2, leading to inhibit NF-kappa-B signaling. Catalyzes auto-GlcNAcylation, which is required for activity toward death domain-containing host target proteins. The polypeptide is Protein-arginine N-acetylglucosaminyltransferase NleB1 (Escherichia coli O157:H7).